The sequence spans 428 residues: Serine--tRNA ligase (428 aa).

An L-serine-binding site is contributed by 235-237; sequence TAE. Residue 266-268 coordinates ATP; that stretch reads RSE. Residue E289 coordinates L-serine. ATP is bound at residue 353–356; that stretch reads EISS. Residue S389 coordinates L-serine.

The protein belongs to the class-II aminoacyl-tRNA synthetase family. Type-1 seryl-tRNA synthetase subfamily. As to quaternary structure, homodimer. The tRNA molecule binds across the dimer.

The protein localises to the cytoplasm. It carries out the reaction tRNA(Ser) + L-serine + ATP = L-seryl-tRNA(Ser) + AMP + diphosphate + H(+). The enzyme catalyses tRNA(Sec) + L-serine + ATP = L-seryl-tRNA(Sec) + AMP + diphosphate + H(+). It participates in aminoacyl-tRNA biosynthesis; selenocysteinyl-tRNA(Sec) biosynthesis; L-seryl-tRNA(Sec) from L-serine and tRNA(Sec): step 1/1. Its function is as follows. Catalyzes the attachment of serine to tRNA(Ser). Is also able to aminoacylate tRNA(Sec) with serine, to form the misacylated tRNA L-seryl-tRNA(Sec), which will be further converted into selenocysteinyl-tRNA(Sec). This Shewanella halifaxensis (strain HAW-EB4) protein is Serine--tRNA ligase.